The following is a 99-amino-acid chain: Nucleoid-associated protein SUB1611 (99 aa).

This sequence belongs to the YbaB/EbfC family. Homodimer.

The protein localises to the cytoplasm. Its subcellular location is the nucleoid. In terms of biological role, binds to DNA and alters its conformation. May be involved in regulation of gene expression, nucleoid organization and DNA protection. This chain is Nucleoid-associated protein SUB1611, found in Streptococcus uberis (strain ATCC BAA-854 / 0140J).